A 210-amino-acid chain; its full sequence is Large ribosomal subunit protein bL25 (210 aa).

Residues E191–P200 show a composition bias toward low complexity. The disordered stretch occupies residues E191 to K210.

The protein belongs to the bacterial ribosomal protein bL25 family. CTC subfamily. As to quaternary structure, part of the 50S ribosomal subunit; part of the 5S rRNA/L5/L18/L25 subcomplex. Contacts the 5S rRNA. Binds to the 5S rRNA independently of L5 and L18.

Its function is as follows. This is one of the proteins that binds to the 5S RNA in the ribosome where it forms part of the central protuberance. The polypeptide is Large ribosomal subunit protein bL25 (Paracidovorax citrulli (strain AAC00-1) (Acidovorax citrulli)).